A 297-amino-acid polypeptide reads, in one-letter code: tRNA pseudouridine synthase B (297 aa).

The Nucleophile role is filled by D41.

It belongs to the pseudouridine synthase TruB family. Type 1 subfamily.

It catalyses the reaction uridine(55) in tRNA = pseudouridine(55) in tRNA. Responsible for synthesis of pseudouridine from uracil-55 in the psi GC loop of transfer RNAs. The polypeptide is tRNA pseudouridine synthase B (Synechococcus sp. (strain CC9311)).